The primary structure comprises 256 residues: tRNA pseudouridine synthase A (256 aa).

The active-site Nucleophile is Asp-52. Tyr-110 serves as a coordination point for substrate.

This sequence belongs to the tRNA pseudouridine synthase TruA family. Homodimer.

The enzyme catalyses uridine(38/39/40) in tRNA = pseudouridine(38/39/40) in tRNA. Formation of pseudouridine at positions 38, 39 and 40 in the anticodon stem and loop of transfer RNAs. This Stenotrophomonas maltophilia (strain R551-3) protein is tRNA pseudouridine synthase A.